Here is a 253-residue protein sequence, read N- to C-terminus: uncharacterized protein (253 aa).

An N-acetylalanine modification is found at A2.

This sequence belongs to the NAD(P)-dependent epimerase/dehydratase family. Homodimer.

This is an uncharacterized protein from Arabidopsis thaliana (Mouse-ear cress).